Here is a 160-residue protein sequence, read N- to C-terminus: Ribosomal RNA large subunit methyltransferase H (160 aa).

S-adenosyl-L-methionine is bound by residues Leu-76, Gly-108, and 127 to 132 (LGKLTW).

The protein belongs to the RNA methyltransferase RlmH family. Homodimer.

Its subcellular location is the cytoplasm. It catalyses the reaction pseudouridine(1915) in 23S rRNA + S-adenosyl-L-methionine = N(3)-methylpseudouridine(1915) in 23S rRNA + S-adenosyl-L-homocysteine + H(+). In terms of biological role, specifically methylates the pseudouridine at position 1915 (m3Psi1915) in 23S rRNA. The sequence is that of Ribosomal RNA large subunit methyltransferase H from Agrobacterium fabrum (strain C58 / ATCC 33970) (Agrobacterium tumefaciens (strain C58)).